The primary structure comprises 146 residues: D-aminoacyl-tRNA deacylase (146 aa).

The Gly-cisPro motif, important for rejection of L-amino acids signature appears at 138 to 139 (GP).

The protein belongs to the DTD family. As to quaternary structure, homodimer.

It localises to the cytoplasm. It carries out the reaction glycyl-tRNA(Ala) + H2O = tRNA(Ala) + glycine + H(+). The enzyme catalyses a D-aminoacyl-tRNA + H2O = a tRNA + a D-alpha-amino acid + H(+). An aminoacyl-tRNA editing enzyme that deacylates mischarged D-aminoacyl-tRNAs. Also deacylates mischarged glycyl-tRNA(Ala), protecting cells against glycine mischarging by AlaRS. Acts via tRNA-based rather than protein-based catalysis; rejects L-amino acids rather than detecting D-amino acids in the active site. By recycling D-aminoacyl-tRNA to D-amino acids and free tRNA molecules, this enzyme counteracts the toxicity associated with the formation of D-aminoacyl-tRNA entities in vivo and helps enforce protein L-homochirality. This Xanthomonas oryzae pv. oryzae (strain MAFF 311018) protein is D-aminoacyl-tRNA deacylase.